The primary structure comprises 105 residues: Small cysteine and glycine repeat-containing protein 4 (105 aa).

The segment at 4–87 (CGCGSCGGCG…RRTCGSCGCG (84 aa)) is 14 X 2 AA repeats of CG.

Belongs to the KRTAP type 28 family.

Functionally, in the hair cortex, hair keratin intermediate filaments are embedded in an interfilamentous matrix, consisting of hair keratin-associated proteins (KRTAP), which are essential for the formation of a rigid and resistant hair shaft through their extensive disulfide bond cross-linking with abundant cysteine residues of hair keratins. The matrix proteins include the high-sulfur and high-glycine-tyrosine keratins. In Homo sapiens (Human), this protein is Small cysteine and glycine repeat-containing protein 4.